The following is an 86-amino-acid chain: Large ribosomal subunit protein bL27 (86 aa).

The interval Met1–Lys24 is disordered.

This sequence belongs to the bacterial ribosomal protein bL27 family.

This is Large ribosomal subunit protein bL27 from Rickettsia felis (strain ATCC VR-1525 / URRWXCal2) (Rickettsia azadi).